The following is a 692-amino-acid chain: ABC1 family protein C21C3.03, mitochondrial (692 aa).

The N-terminal 91 residues, 1–91 (MISFSHWNSH…RKFTTRQKSE (91 aa)), are a transit peptide targeting the mitochondrion. Helical transmembrane passes span 96 to 116 (WRIL…LWIL) and 161 to 181 (LFII…ISFL).

The protein belongs to the protein kinase superfamily. ADCK protein kinase family.

Its subcellular location is the mitochondrion membrane. The polypeptide is ABC1 family protein C21C3.03, mitochondrial (Schizosaccharomyces pombe (strain 972 / ATCC 24843) (Fission yeast)).